A 134-amino-acid polypeptide reads, in one-letter code: Profilin-2 (134 aa).

Cys13 and Cys118 are disulfide-bonded. The short motif at 84–100 is the Involved in PIP2 interaction element; the sequence is AVTRGKKGTGGITIKKT. Thr114 is modified (phosphothreonine).

The protein belongs to the profilin family. As to quaternary structure, occurs in many kinds of cells as a complex with monomeric actin in a 1:1 ratio. In terms of processing, phosphorylated by MAP kinases.

Its subcellular location is the cytoplasm. It is found in the cytoskeleton. Functionally, binds to actin and affects the structure of the cytoskeleton. At high concentrations, profilin prevents the polymerization of actin, whereas it enhances it at low concentrations. This Olea europaea (Common olive) protein is Profilin-2.